Reading from the N-terminus, the 159-residue chain is Defense protein l(2)34Fc (159 aa).

An N-terminal signal peptide occupies residues 1–17; it reads MFRLLVLAACLAISVHA. Positions 18–159 constitute a Reelin domain; sequence YSDGAPKAAC…GRVTKDIDVE (142 aa). Cys27 and Cys99 are disulfide-bonded.

This sequence belongs to the insect defense protein family.

It localises to the secreted. May have antimicrobial activity. A late response immune regulated gene that is negatively regulated by spz during the immune response. This is Defense protein l(2)34Fc (l(2)34Fc) from Drosophila melanogaster (Fruit fly).